We begin with the raw amino-acid sequence, 184 residues long: MNWRSERIWVEFITGSRKISNFCWAFILFLGSSGFLLVGISSYLGKNFISLFPPQQILFFPQGLVMSFYGIAGLFISAYLWCAISWNVGSGYDRFDRKEGIVCIFRWGFPGKNRRIFFRYLIKDIQSIRIELKEGIYTRRVLYLEIRGQGAIPLTRTDENLTPREMEQKAAELAYFLRVPIEVF.

Helical transmembrane passes span asparagine 21–tyrosine 43 and glycine 63–serine 85.

It belongs to the Ycf4 family.

The protein resides in the plastid. Its subcellular location is the chloroplast thylakoid membrane. Functionally, seems to be required for the assembly of the photosystem I complex. This chain is Photosystem I assembly protein Ycf4, found in Spinacia oleracea (Spinach).